A 279-amino-acid polypeptide reads, in one-letter code: 3-methyl-2-oxobutanoate hydroxymethyltransferase 2 (279 aa).

The Mg(2+) site is built by Asp-58 and Asp-97. Residues 58–59 (DS), Asp-97, and Lys-126 each bind 3-methyl-2-oxobutanoate. Glu-128 is a Mg(2+) binding site. The active-site Proton acceptor is the Glu-195.

It belongs to the PanB family. In terms of assembly, homodecamer; pentamer of dimers. Requires Mg(2+) as cofactor.

It localises to the cytoplasm. It carries out the reaction 3-methyl-2-oxobutanoate + (6R)-5,10-methylene-5,6,7,8-tetrahydrofolate + H2O = 2-dehydropantoate + (6S)-5,6,7,8-tetrahydrofolate. It functions in the pathway cofactor biosynthesis; (R)-pantothenate biosynthesis; (R)-pantoate from 3-methyl-2-oxobutanoate: step 1/2. In terms of biological role, catalyzes the reversible reaction in which hydroxymethyl group from 5,10-methylenetetrahydrofolate is transferred onto alpha-ketoisovalerate to form ketopantoate. The polypeptide is 3-methyl-2-oxobutanoate hydroxymethyltransferase 2 (Methylibium petroleiphilum (strain ATCC BAA-1232 / LMG 22953 / PM1)).